The following is a 137-amino-acid chain: Ribonuclease VapC3 (137 aa).

The region spanning 12–129 (VVVDASAMVD…LTTDERLARA (118 aa)) is the PINc domain. Mg(2+)-binding residues include D15 and D105.

This sequence belongs to the PINc/VapC protein family. Mg(2+) serves as cofactor.

Functionally, toxic component of a type II toxin-antitoxin (TA) system. An RNase. Its toxic effect is neutralized by coexpression with cognate antitoxin VapB3. This chain is Ribonuclease VapC3, found in Mycobacterium tuberculosis (strain CDC 1551 / Oshkosh).